Consider the following 325-residue polypeptide: Elongation factor P--(R)-beta-lysine ligase (325 aa).

76–78 (SPE) provides a ligand contact to substrate. Residues 100-102 (RNE) and Asn109 each bind ATP. A substrate-binding site is contributed by Tyr118. ATP is bound at residue 244-245 (EL). Residue Glu251 participates in substrate binding. Gly300 is a binding site for ATP.

It belongs to the class-II aminoacyl-tRNA synthetase family. EpmA subfamily. Homodimer.

It carries out the reaction D-beta-lysine + L-lysyl-[protein] + ATP = N(6)-((3R)-3,6-diaminohexanoyl)-L-lysyl-[protein] + AMP + diphosphate + H(+). With EpmB is involved in the beta-lysylation step of the post-translational modification of translation elongation factor P (EF-P). Catalyzes the ATP-dependent activation of (R)-beta-lysine produced by EpmB, forming a lysyl-adenylate, from which the beta-lysyl moiety is then transferred to the epsilon-amino group of a conserved specific lysine residue in EF-P. The chain is Elongation factor P--(R)-beta-lysine ligase from Sodalis glossinidius (strain morsitans).